We begin with the raw amino-acid sequence, 113 residues long: Ig heavy chain V-III region E109 (113 aa).

The Ig-like domain maps to 1-113 (EVKLEESGGG…YWGQGTLVTV (113 aa)). The cysteines at positions 22 and 98 are disulfide-linked.

This is Ig heavy chain V-III region E109 from Mus musculus (Mouse).